Consider the following 173-residue polypeptide: Lens fiber membrane intrinsic protein (173 aa).

Over 1 to 3 (MYS) the chain is Cytoplasmic. Residues 4–24 (FMGGGLFCAWVGTILLVVATA) form a helical membrane-spanning segment. Residues 25 to 66 (TDHWMQYRLSGSFAHQGLWRYCLGNKCFLQTESIAYWNATRA) lie on the Extracellular side of the membrane. W43 and W61 each carry a C-linked (Man) tryptophan glycan. N62 carries an N-linked (GlcNAc...) asparagine glycan. Residues 67 to 87 (FMILSALCATSGIIMGVLAFA) form a helical membrane-spanning segment. Residues 88 to 98 (QQSTFTRLSRP) lie on the Cytoplasmic side of the membrane. The chain crosses the membrane as a helical span at residues 99-119 (FSAGIMFFASTLFVLLALAIY). The Extracellular segment spans residues 120-140 (TGVTVSFLGRRFGDWRFSWSY). A helical membrane pass occupies residues 141–161 (ILGWVALLMTFFAGIFYMCAY). Residues 162-173 (RMHECRRLATPR) lie on the Cytoplasmic side of the membrane. T171 is modified (phosphothreonine).

The protein belongs to the PMP-22/EMP/MP20 family. In terms of assembly, seems to be associated with itself or another lens membrane component via disulfide bonds.

Its subcellular location is the membrane. Functionally, present in the thicker 16-17 nm junctions of mammalian lens fiber cells, where it may contribute to cell junctional organization. Acts as a receptor for calmodulin. May play an important role in both lens development and cataractogenesis. The sequence is that of Lens fiber membrane intrinsic protein (Lim2) from Mus musculus (Mouse).